The chain runs to 144 residues: UPF0102 protein BURPS1106A_3900 (144 aa).

Residues 1-28 form a disordered region; it reads MCHAREASPGTGEPEAAPRDNFPRAAGS.

It belongs to the UPF0102 family.

This chain is UPF0102 protein BURPS1106A_3900, found in Burkholderia pseudomallei (strain 1106a).